Here is a 319-residue protein sequence, read N- to C-terminus: tRNA uridine(34) hydroxylase (319 aa).

One can recognise a Rhodanese domain in the interval 125–219 (LDENTVVIDA…YGKDPEVQGD (95 aa)). C179 functions as the Cysteine persulfide intermediate in the catalytic mechanism.

Belongs to the TrhO family.

The enzyme catalyses uridine(34) in tRNA + AH2 + O2 = 5-hydroxyuridine(34) in tRNA + A + H2O. Functionally, catalyzes oxygen-dependent 5-hydroxyuridine (ho5U) modification at position 34 in tRNAs. This is tRNA uridine(34) hydroxylase from Lactococcus lactis subsp. cremoris (strain MG1363).